The sequence spans 302 residues: Phytoene synthase (302 aa).

Belongs to the phytoene/squalene synthase family. ATP is required as a cofactor. Mn(2+) serves as cofactor. It depends on Mg(2+) as a cofactor.

Its pathway is carotenoid biosynthesis; phytoene biosynthesis. In terms of biological role, involved in the biosynthesis of carotenoids. Catalyzes the condensation of two molecules of geranylgeranyl diphosphate (GGPP) to give prephytoene diphosphate (PPPP) and the subsequent rearrangement of the cyclopropylcarbinyl intermediate to yield phytoene. This chain is Phytoene synthase (crtB), found in Mycobacterium bovis (strain ATCC BAA-935 / AF2122/97).